A 946-amino-acid polypeptide reads, in one-letter code: Protein translocase subunit SecA (946 aa).

ATP contacts are provided by residues glutamine 90, 108–112 (GEGKT), and aspartate 509.

This sequence belongs to the SecA family. As to quaternary structure, monomer and homodimer. Part of the essential Sec protein translocation apparatus which comprises SecA, SecYEG and auxiliary proteins SecDF. Other proteins may also be involved.

The protein resides in the cell inner membrane. The protein localises to the cellular thylakoid membrane. It is found in the cytoplasm. It carries out the reaction ATP + H2O + cellular proteinSide 1 = ADP + phosphate + cellular proteinSide 2.. Its function is as follows. Part of the Sec protein translocase complex. Interacts with the SecYEG preprotein conducting channel. Has a central role in coupling the hydrolysis of ATP to the transfer of proteins into and across the cell membrane, serving as an ATP-driven molecular motor driving the stepwise translocation of polypeptide chains across the membrane. Functionally, probably participates in protein translocation into and across both the cytoplasmic and thylakoid membranes in cyanobacterial cells. The polypeptide is Protein translocase subunit SecA (Synechococcus sp. (strain RCC307)).